We begin with the raw amino-acid sequence, 199 residues long: Recombination protein RecR (199 aa).

The C4-type zinc-finger motif lies at 56 to 71 (CAVCGNIAEETQCRIC). The Toprim domain occupies 79-174 (TVICVVEEPK…KVTRLASGLP (96 aa)).

It belongs to the RecR family.

May play a role in DNA repair. It seems to be involved in an RecBC-independent recombinational process of DNA repair. It may act with RecF and RecO. This is Recombination protein RecR from Thermobifida fusca (strain YX).